A 189-amino-acid chain; its full sequence is CASP-like protein 1U2 (189 aa).

Residues 1–24 (MFGSDDSGCHVMDDDVAPPANGSK) are Cytoplasmic-facing. A helical membrane pass occupies residues 25 to 45 (AVTLLLRLITLALALTSAVLM). Residues 46 to 71 (ATASECTIYGLDGATATTVTFKDYQP) lie on the Extracellular side of the membrane. A helical transmembrane segment spans residues 72–92 (FIYLVGSNIAATILEVAAIYV). Topologically, residues 93–109 (QVGKGDDVEDAPMIPRV) are cytoplasmic. The helical transmembrane segment at 110–130 (VLVVVDVAVQMLLYSATGAVF) threads the bilayer. At 131–158 (AAVMAYGPQISACTGAAGHFCEQVQRSK) the chain is on the extracellular side. A helical membrane pass occupies residues 159–179 (IISLAASLSAVLAAVAKDVAL). At 180–189 (PCSVWPHPSS) the chain is on the cytoplasmic side.

It belongs to the Casparian strip membrane proteins (CASP) family. As to quaternary structure, homodimer and heterodimers.

It is found in the cell membrane. This chain is CASP-like protein 1U2, found in Sorghum bicolor (Sorghum).